Reading from the N-terminus, the 158-residue chain is Regulator of sigma D (158 aa).

Belongs to the Rsd/AlgQ family. Interacts with RpoD.

It localises to the cytoplasm. Its function is as follows. Binds RpoD and negatively regulates RpoD-mediated transcription activation by preventing the interaction between the primary sigma factor RpoD with the catalytic core of the RNA polymerase and with promoter DNA. May be involved in replacement of the RNA polymerase sigma subunit from RpoD to RpoS during the transition from exponential growth to the stationary phase. In Shigella dysenteriae serotype 1 (strain Sd197), this protein is Regulator of sigma D.